We begin with the raw amino-acid sequence, 259 residues long: Adenosylcobinamide-GDP ribazoletransferase (259 aa).

6 consecutive transmembrane segments (helical) span residues 9-29, 43-63, 64-84, 118-138, 143-163, and 196-216; these read NLFF…WIEV, LVGL…LYWV, SPSV…GGFH, ALAL…LALF, VSLA…SFIF, and VLAL…GLVI.

It belongs to the CobS family. The cofactor is Mg(2+).

It localises to the cell inner membrane. The enzyme catalyses alpha-ribazole + adenosylcob(III)inamide-GDP = adenosylcob(III)alamin + GMP + H(+). It catalyses the reaction alpha-ribazole 5'-phosphate + adenosylcob(III)inamide-GDP = adenosylcob(III)alamin 5'-phosphate + GMP + H(+). It functions in the pathway cofactor biosynthesis; adenosylcobalamin biosynthesis; adenosylcobalamin from cob(II)yrinate a,c-diamide: step 7/7. Its function is as follows. Joins adenosylcobinamide-GDP and alpha-ribazole to generate adenosylcobalamin (Ado-cobalamin). Also synthesizes adenosylcobalamin 5'-phosphate from adenosylcobinamide-GDP and alpha-ribazole 5'-phosphate. The sequence is that of Adenosylcobinamide-GDP ribazoletransferase from Shewanella halifaxensis (strain HAW-EB4).